The primary structure comprises 218 residues: Carboxylesterase 2 (218 aa).

Catalysis depends on charge relay system residues Ser114, Asp168, and His199.

Belongs to the AB hydrolase superfamily. AB hydrolase 2 family. In terms of assembly, homodimer.

The enzyme catalyses a carboxylic ester + H2O = an alcohol + a carboxylate + H(+). Functionally, hydrolyzes carboxylic ester bonds with relatively broad substrate specificity. The chain is Carboxylesterase 2 (estB) from Pseudomonas fluorescens.